The chain runs to 151 residues: 3-hydroxyacyl-[acyl-carrier-protein] dehydratase FabZ (151 aa).

Residue histidine 54 is part of the active site.

The protein belongs to the thioester dehydratase family. FabZ subfamily.

It localises to the cytoplasm. It carries out the reaction a (3R)-hydroxyacyl-[ACP] = a (2E)-enoyl-[ACP] + H2O. Functionally, involved in unsaturated fatty acids biosynthesis. Catalyzes the dehydration of short chain beta-hydroxyacyl-ACPs and long chain saturated and unsaturated beta-hydroxyacyl-ACPs. This chain is 3-hydroxyacyl-[acyl-carrier-protein] dehydratase FabZ, found in Idiomarina loihiensis (strain ATCC BAA-735 / DSM 15497 / L2-TR).